The sequence spans 512 residues: Histidine ammonia-lyase (512 aa).

A cross-link (5-imidazolinone (Ala-Gly)) is located at residues 142-144 (ASG). Residue Ser143 is modified to 2,3-didehydroalanine (Ser).

Belongs to the PAL/histidase family. Contains an active site 4-methylidene-imidazol-5-one (MIO), which is formed autocatalytically by cyclization and dehydration of residues Ala-Ser-Gly.

The protein localises to the cytoplasm. The catalysed reaction is L-histidine = trans-urocanate + NH4(+). The protein operates within amino-acid degradation; L-histidine degradation into L-glutamate; N-formimidoyl-L-glutamate from L-histidine: step 1/3. This is Histidine ammonia-lyase from Bartonella henselae (strain ATCC 49882 / DSM 28221 / CCUG 30454 / Houston 1) (Rochalimaea henselae).